The primary structure comprises 282 residues: Chromatin modification-related protein YNG2 (282 aa).

The stretch at leucine 35 to lysine 86 forms a coiled coil. The segment at aspartate 123–glutamate 217 is disordered. Positions alanine 129 to serine 143 are enriched in low complexity. Position 183 is a phosphoserine (serine 183). Phosphothreonine is present on threonine 185. At serine 188 the chain carries Phosphoserine. A compositionally biased stretch (basic and acidic residues) spans isoleucine 191–asparagine 203. The span at serine 204–proline 214 shows a compositional bias: polar residues. A PHD-type zinc finger spans residues threonine 222–glutamate 271. Zn(2+) contacts are provided by cysteine 225, cysteine 227, cysteine 238, cysteine 243, histidine 249, cysteine 252, cysteine 265, and cysteine 268.

Belongs to the ING family. As to quaternary structure, interacts with H3K4me3 and to a lesser extent with H3K4me2. Component of the NuA4 histone acetyltransferase complex composed of at least ACT1, ARP4, YAF9, VID21, SWC4, EAF3, EAF5, EAF6, EAF7, EPL1, ESA1, TRA1 and YNG2.

The protein localises to the nucleus. Its function is as follows. Component of the NuA4 histone acetyltransferase complex which is involved in transcriptional activation of selected genes principally by acetylation of nucleosomal histone H4 and H2A. The NuA4 complex is also involved in DNA repair. Involved in cell cycle progression and meiosis. The sequence is that of Chromatin modification-related protein YNG2 (YNG2) from Saccharomyces cerevisiae (strain ATCC 204508 / S288c) (Baker's yeast).